The primary structure comprises 189 residues: Matrix protein (189 aa).

This sequence belongs to the novirhabdovirus matrix protein family. In terms of assembly, homomultimer. Interacts with nucleoprotein and with the cytoplasmic domain of glycoprotein.

It is found in the virion membrane. Its subcellular location is the host endomembrane system. Plays a major role in assembly and budding of virion. Completely covers the ribonucleoprotein coil and keep it in condensed bullet-shaped form. Inhibits viral transcription and stimulates replication. This is Matrix protein (M) from Gobiosoma bosc (Naked goby).